The primary structure comprises 234 residues: Sugar fermentation stimulation protein homolog (234 aa).

It belongs to the SfsA family.

This is Sugar fermentation stimulation protein homolog from Shewanella halifaxensis (strain HAW-EB4).